A 379-amino-acid chain; its full sequence is Flagellin A (379 aa).

2 coiled-coil regions span residues 103-128 (TNSASERQALDEESTALQDELNRIAE) and 302-341 (YVDSQRAELGAKQNRLSHSINNLANIQENVEASNSRIKDT).

Belongs to the bacterial flagellin family. Heteromer of multiple flagellin subunits including FlaA, FlaB, FlaC, FlaD and possibly FlaE.

Its subcellular location is the secreted. The protein resides in the bacterial flagellum. In terms of biological role, flagellin is the subunit protein which polymerizes to form the filaments of bacterial flagella. FlaA is essential for flagellar synthesis and full motility. Important for virulence at two different levels: is needed for crossing the fish integument and may play a role once the bacterium has entered the host. The polypeptide is Flagellin A (flaA) (Vibrio anguillarum (Listonella anguillarum)).